We begin with the raw amino-acid sequence, 241 residues long: MGQKIHPTGFRLGITQDHWSRWFADTDRYPELLQEDFKVRNYVNKNLSNAGIAGVRIERKADQIDLEVRTARPGVVVGRGGSGIESLRVGLQKELGDDRPIRINVVEVARVDAEATLIAEYIVQQLVRRVSFRRVVRQAIQRAQRAGVEGIKIQVGGRLNGAEIARSEWTREGRVPLHTLRANIDYSYRTASTTYGILGVKVWVFKGEVIPGADEQPTNREPQQRRRQQQRRRQQFEDRSE.

The KH type-2 domain occupies 39 to 109 (VRNYVNKNLS…PIRINVVEVA (71 aa)). A disordered region spans residues 213–241 (ADEQPTNREPQQRRRQQQRRRQQFEDRSE).

The protein belongs to the universal ribosomal protein uS3 family. As to quaternary structure, part of the 30S ribosomal subunit. Forms a tight complex with proteins S10 and S14.

Its function is as follows. Binds the lower part of the 30S subunit head. Binds mRNA in the 70S ribosome, positioning it for translation. The protein is Small ribosomal subunit protein uS3 of Acaryochloris marina (strain MBIC 11017).